The primary structure comprises 199 residues: Ribosome maturation factor RimP (199 aa).

A disordered region spans residues 165 to 199 (AGNLPPQPEDDEDMLADFEIDESEDEEDPETGDVQ). The span at 172-199 (PEDDEDMLADFEIDESEDEEDPETGDVQ) shows a compositional bias: acidic residues.

Belongs to the RimP family.

It is found in the cytoplasm. Required for maturation of 30S ribosomal subunits. The sequence is that of Ribosome maturation factor RimP from Hyphomonas neptunium (strain ATCC 15444).